The sequence spans 438 residues: Fibrinogen gamma chain (438 aa).

Residues 1–25 form the signal peptide; sequence MTRLPKQGLLLLQSLALLSSAFGNI. N76 is a glycosylation site (N-linked (GlcNAc...) asparagine). Positions 167-414 constitute a Fibrinogen C-terminal domain; that stretch reads QIQEFTGKDC…SVTMKIMPLN (248 aa). C176 and C205 are joined by a disulfide. D341, D343, and G347 together coordinate Ca(2+). An intrachain disulfide couples C349 to C362.

Heterohexamer; disulfide linked. Contains 2 sets of 3 non-identical chains (alpha, beta and gamma). The 2 heterotrimers are in head to head conformation with the N-termini in a small central domain. In terms of processing, conversion of fibrinogen to fibrin is triggered by thrombin, which cleaves fibrinopeptides A and B from alpha and beta chains, and thus exposes the N-terminal polymerization sites responsible for the formation of the soft clot. The soft clot is converted into the hard clot by factor XIIIA which catalyzes the epsilon-(gamma-glutamyl)lysine cross-linking between gamma chains (stronger) and between alpha chains (weaker) of different monomers.

It localises to the secreted. Functionally, together with fibrinogen alpha (FGA) and fibrinogen beta (FGB), polymerizes to form an insoluble fibrin matrix. Has a major function in hemostasis as one of the primary components of blood clots. The sequence is that of Fibrinogen gamma chain (fgg) from Xenopus laevis (African clawed frog).